The chain runs to 226 residues: Guanylate kinase (226 aa).

One can recognise a Guanylate kinase-like domain in the interval 13 to 193 (GLLLVLSAPS…ALAQLQAIVR (181 aa)). 20–27 (APSGAGKT) contacts ATP.

The protein belongs to the guanylate kinase family.

The protein localises to the cytoplasm. The catalysed reaction is GMP + ATP = GDP + ADP. In terms of biological role, essential for recycling GMP and indirectly, cGMP. The chain is Guanylate kinase from Anaeromyxobacter dehalogenans (strain 2CP-C).